A 494-amino-acid polypeptide reads, in one-letter code: Probable malate:quinone oxidoreductase (494 aa).

Belongs to the MQO family. FAD is required as a cofactor.

The catalysed reaction is (S)-malate + a quinone = a quinol + oxaloacetate. Its pathway is carbohydrate metabolism; tricarboxylic acid cycle; oxaloacetate from (S)-malate (quinone route): step 1/1. This Kocuria rhizophila (strain ATCC 9341 / DSM 348 / NBRC 103217 / DC2201) protein is Probable malate:quinone oxidoreductase.